The sequence spans 560 residues: Bifunctional NAD(P)H-hydrate repair enzyme (560 aa).

The tract at residues 1–241 is NAD(P)H-hydrate epimerase; that stretch reads MLSRLSERCT…WMTAPERMRV (241 aa). Residues 29–235 enclose the YjeF N-terminal domain; it reads LRDAEPAAAA…SLGLEDWMTA (207 aa). The tract at residues 77 to 81 is NADPHX 1; for epimerase activity; the sequence is NNGGD. Residues Asn-78 and Asp-145 each contribute to the K(+) site. The segment at 149–155 is NADPHX 1; for epimerase activity; the sequence is GTGICGP. Tyr-160 and Asp-178 together coordinate (6S)-NADPHX. Ser-181 provides a ligand contact to K(+). In terms of domain architecture, YjeF C-terminal spans 249–547; it reads LDDVYEYFGI…HRVPLIVNAS (299 aa). Positions 249–560 are ADP-dependent (S)-NAD(P)H-hydrate dehydratase; sequence LDDVYEYFGI…PASRQRPSGQ (312 aa). Gly-351 is a (6S)-NADPHX binding site. Positions 417 to 423 are NADPHX 2; for dehydratase activity; it reads HPGEAAR. ADP is bound by residues 454-458 and 475-484; these read KGPGT and NAGMASGGMG. Asp-485 contributes to the (6S)-NADPHX binding site.

The protein in the N-terminal section; belongs to the NnrE/AIBP family. In the C-terminal section; belongs to the NnrD/CARKD family. K(+) serves as cofactor.

It carries out the reaction (6S)-NADHX + ADP = AMP + phosphate + NADH + H(+). The enzyme catalyses (6S)-NADPHX + ADP = AMP + phosphate + NADPH + H(+). It catalyses the reaction (6R)-NADHX = (6S)-NADHX. The catalysed reaction is (6R)-NADPHX = (6S)-NADPHX. Its function is as follows. Bifunctional enzyme that catalyzes the epimerization of the S- and R-forms of NAD(P)HX and the dehydration of the S-form of NAD(P)HX at the expense of ADP, which is converted to AMP. This allows the repair of both epimers of NAD(P)HX, a damaged form of NAD(P)H that is a result of enzymatic or heat-dependent hydration. In Leishmania major, this protein is Bifunctional NAD(P)H-hydrate repair enzyme.